Consider the following 161-residue polypeptide: MEFWESSAMPDDVKREIKEIYWEDRKKLLFCQKLKSYVRRILVYGDQEDALAGVKDMKTSIIRYSEYLKKPCVVICCVSNKSIVYRLNSMVFFYHEYLEELGGDYSVYQDLYCDEVLSSSSTEEEDVGVIYRNVIMASTQEKFSWSDCQQIVISDYDVTLL.

Residues 9–21 (MPDDVKREIKEIY) are binding to host SKP1 protein. The LXCXE motif, interaction with host RBR motif lies at 111-115 (LYCDE).

In terms of assembly, interacts with host SKP1. Interacts (via LXCXE domain) with host retinoblastoma-related protein 2 (RBR2). Interacts (via LXCXE domain) with human RB1. Interacts (via LXCXE domain) with retinoblastoma-related proteins (RBR).

In terms of biological role, interacts with and disrupts the function of host retinoblastoma-related proteins RBR, which are key regulators of the cell cycle. Induces transcriptional activation of E2F-regulated S-phase and G2/M-phase-specific genes. Inactivation of the ability of RBR to arrest the cell cycle leads to the stimulation of viral DNA replication. Acts as a suppressor of RNA-mediated gene silencing, also known as post-transcriptional gene silencing (PTGS), a mechanism of plant viral defense that limits the accumulation of viral RNAs. The chain is Cell cycle link protein (DNA-C) from Musa (BBTV).